A 309-amino-acid polypeptide reads, in one-letter code: Formimidoylglutamase (309 aa).

Mn(2+) contacts are provided by histidine 128, aspartate 153, histidine 155, aspartate 157, cysteine 240, and aspartate 242.

Belongs to the arginase family. Mn(2+) is required as a cofactor.

The enzyme catalyses N-formimidoyl-L-glutamate + H2O = formamide + L-glutamate. It functions in the pathway amino-acid degradation; L-histidine degradation into L-glutamate; L-glutamate from N-formimidoyl-L-glutamate (hydrolase route): step 1/1. In terms of biological role, catalyzes the conversion of N-formimidoyl-L-glutamate to L-glutamate and formamide. This Staphylococcus carnosus (strain TM300) protein is Formimidoylglutamase.